Reading from the N-terminus, the 594-residue chain is Probable translation initiation factor IF-2 (594 aa).

The region spanning 3 to 220 (IRSPIVSVLG…MLMGLAQQYL (218 aa)) is the tr-type G domain. Positions 12–19 (GHVDHGKT) are G1. Residue 12–19 (GHVDHGKT) participates in GTP binding. Residues 37–41 (GITQH) form a G2 region. The segment at 76 to 79 (DTPG) is G3. GTP contacts are provided by residues 76–80 (DTPGH) and 130–133 (NKID). A G4 region spans residues 130–133 (NKID). The tract at residues 198–200 (SAI) is G5.

The protein belongs to the TRAFAC class translation factor GTPase superfamily. Classic translation factor GTPase family. IF-2 subfamily.

Functionally, function in general translation initiation by promoting the binding of the formylmethionine-tRNA to ribosomes. Seems to function along with eIF-2. This chain is Probable translation initiation factor IF-2 (infB), found in Methanothermobacter thermautotrophicus (strain ATCC 29096 / DSM 1053 / JCM 10044 / NBRC 100330 / Delta H) (Methanobacterium thermoautotrophicum).